Consider the following 816-residue polypeptide: H(+)/Cl(-) exchange transporter 5 (816 aa).

The Cytoplasmic segment spans residues 1–124 (MAMWQGAMDN…WALIHSVSDA (124 aa)). Transmembrane regions (helical) follow at residues 125 to 162 (FSGW…ICTG) and 208 to 231 (VNYF…VKVF). Positions 237-241 (GSGIP) match the Selectivity filter part_1 motif. Residue Ser238 coordinates chloride. Residues 240–247 (IPEIKTIL) constitute an intramembrane region (helical). Transmembrane regions (helical) follow at residues 256–275 (LGKW…VSSG) and 281–300 (EGPL…HCFN). A Selectivity filter part_2 motif is present at residues 279–283 (GKEGP). 2 consecutive intramembrane regions (helical) follow at residues 312-324 (VLSA…VSVA) and 328-336 (PIGGVLFSL). 5 helical membrane-spanning segments follow: residues 348–366 (LWRS…RSIN), 389–414 (LVPF…IAWC), 422–442 (LGKY…ILAF), 498–518 (MWQL…TFGM), and 523–542 (GLFI…LGVG). A Selectivity filter part_3 motif is present at residues 523-527 (GLFIP). Phe525 lines the chloride pocket. An intramembrane region (helical) is located at residues 570-584 (GLYAMVGAAACLGGV). Residues 585–587 (TRM) constitute an intramembrane region (note=Loop between two helices). Residues 588-599 (TVSLVVIMFELT) constitute an intramembrane region (helical). Residues 600-604 (GGLEY) constitute an intramembrane region (note=Loop between two helices). The chain crosses the membrane as a helical span at residues 605-622 (IVPLMAAAMTSKWVADAL). Residues 623–816 (GREGIYDAHI…NQDPDSILFN (194 aa)) are Cytoplasmic-facing. Residue Tyr628 coordinates chloride. 2 consecutive CBS domains span residues 656-720 (MKPR…ARKK) and 752-812 (ILDL…DPDS). ATP-binding positions include Thr666, 687 to 689 (YSG), and 794 to 797 (TKKD).

The protein belongs to the chloride channel (TC 2.A.49) family. ClC-5/CLCN5 subfamily. In terms of assembly, interacts with NEDD4 and NEDD4L. In terms of processing, ubiquitinated by NEDD4L in the presence of albumin; which promotes endocytosis and proteasomal degradation.

The protein localises to the golgi apparatus membrane. Its subcellular location is the endosome membrane. The protein resides in the cell membrane. The catalysed reaction is 2 chloride(in) + H(+)(out) = 2 chloride(out) + H(+)(in). Functionally, proton-coupled chloride transporter. Functions as antiport system and exchanges chloride ions against protons. Important for normal acidification of the endosome lumen. May play an important role in renal tubular function. The CLC channel family contains both chloride channels and proton-coupled anion transporters that exchange chloride or another anion for protons. The absence of conserved gating glutamate residues is typical for family members that function as channels. This chain is H(+)/Cl(-) exchange transporter 5 (CLCN5), found in Pongo abelii (Sumatran orangutan).